The sequence spans 378 residues: Queuine tRNA-ribosyltransferase (378 aa).

Aspartate 89 (proton acceptor) is an active-site residue. Substrate is bound by residues 89-93, aspartate 143, glutamine 187, and glycine 214; that span reads DSGGF. The segment at 245-251 is RNA binding; sequence GVGKPED. Aspartate 264 serves as the catalytic Nucleophile. The segment at 269 to 273 is RNA binding; important for wobble base 34 recognition; it reads TRNAR. Zn(2+)-binding residues include cysteine 302, cysteine 304, cysteine 307, and histidine 333.

Belongs to the queuine tRNA-ribosyltransferase family. Homodimer. Within each dimer, one monomer is responsible for RNA recognition and catalysis, while the other monomer binds to the replacement base PreQ1. Zn(2+) is required as a cofactor.

The catalysed reaction is 7-aminomethyl-7-carbaguanine + guanosine(34) in tRNA = 7-aminomethyl-7-carbaguanosine(34) in tRNA + guanine. Its pathway is tRNA modification; tRNA-queuosine biosynthesis. In terms of biological role, catalyzes the base-exchange of a guanine (G) residue with the queuine precursor 7-aminomethyl-7-deazaguanine (PreQ1) at position 34 (anticodon wobble position) in tRNAs with GU(N) anticodons (tRNA-Asp, -Asn, -His and -Tyr). Catalysis occurs through a double-displacement mechanism. The nucleophile active site attacks the C1' of nucleotide 34 to detach the guanine base from the RNA, forming a covalent enzyme-RNA intermediate. The proton acceptor active site deprotonates the incoming PreQ1, allowing a nucleophilic attack on the C1' of the ribose to form the product. After dissociation, two additional enzymatic reactions on the tRNA convert PreQ1 to queuine (Q), resulting in the hypermodified nucleoside queuosine (7-(((4,5-cis-dihydroxy-2-cyclopenten-1-yl)amino)methyl)-7-deazaguanosine). The sequence is that of Queuine tRNA-ribosyltransferase from Aeromonas hydrophila subsp. hydrophila (strain ATCC 7966 / DSM 30187 / BCRC 13018 / CCUG 14551 / JCM 1027 / KCTC 2358 / NCIMB 9240 / NCTC 8049).